The chain runs to 154 residues: Large ribosomal subunit protein uL13 (154 aa).

The protein belongs to the universal ribosomal protein uL13 family. Part of the 50S ribosomal subunit.

In terms of biological role, this protein is one of the early assembly proteins of the 50S ribosomal subunit, although it is not seen to bind rRNA by itself. It is important during the early stages of 50S assembly. This is Large ribosomal subunit protein uL13 from Rhodopseudomonas palustris (strain BisB5).